A 377-amino-acid chain; its full sequence is Cytochrome b (377 aa).

A run of 4 helical transmembrane segments spans residues 33–53 (FGSLLGLCLITQIMTGLFLAM), 77–98 (WLIRIIHANGASLFFICLYLHT), 113–133 (WTMGVILMFLVMGTAFMGYVL), and 178–198 (FFMIHFLLPFLIIGGLLVHLL). Heme b is bound by residues His83 and His97. Residues His182 and His196 each contribute to the heme b site. Residue His201 participates in a ubiquinone binding. The next 4 membrane-spanning stretches (helical) occupy residues 226–246 (YKDLVGVLIIMSGLLLLSLLS), 288–308 (LGGVIALVLSVSILFILPLSS), 320–340 (FNQIMFWVFINLVIMLTWIGA), and 347–367 (FIIMGQTLTCSYFMYFILNPM).

Belongs to the cytochrome b family. As to quaternary structure, the main subunits of complex b-c1 are: cytochrome b, cytochrome c1 and the Rieske protein. The cofactor is heme b.

It localises to the mitochondrion inner membrane. Its function is as follows. Component of the ubiquinol-cytochrome c reductase complex (complex III or cytochrome b-c1 complex) that is part of the mitochondrial respiratory chain. The b-c1 complex mediates electron transfer from ubiquinol to cytochrome c. Contributes to the generation of a proton gradient across the mitochondrial membrane that is then used for ATP synthesis. This Tetrodontophora bielanensis (Giant springtail) protein is Cytochrome b (MT-CYB).